Consider the following 270-residue polypeptide: Phosphonates import ATP-binding protein PhnC 2 (270 aa).

The ABC transporter domain maps to 2–245 (LVVEGLTCRF…IARELYDLEA (244 aa)). 34-41 (GRSGAGKS) is a binding site for ATP.

This sequence belongs to the ABC transporter superfamily. Phosphonates importer (TC 3.A.1.9.1) family. In terms of assembly, the complex is composed of two ATP-binding proteins (PhnC), two transmembrane proteins (PhnE) and a solute-binding protein (PhnD).

It is found in the cell inner membrane. It catalyses the reaction phosphonate(out) + ATP + H2O = phosphonate(in) + ADP + phosphate + H(+). Part of the ABC transporter complex PhnCDE involved in phosphonates import. Responsible for energy coupling to the transport system. This chain is Phosphonates import ATP-binding protein PhnC 2, found in Rhodopseudomonas palustris (strain BisA53).